A 177-amino-acid chain; its full sequence is Large ribosomal subunit protein uL6 (177 aa).

Belongs to the universal ribosomal protein uL6 family. In terms of assembly, part of the 50S ribosomal subunit.

Its function is as follows. This protein binds to the 23S rRNA, and is important in its secondary structure. It is located near the subunit interface in the base of the L7/L12 stalk, and near the tRNA binding site of the peptidyltransferase center. The sequence is that of Large ribosomal subunit protein uL6 from Sinorhizobium fredii (strain NBRC 101917 / NGR234).